The chain runs to 856 residues: DNA mismatch repair protein MutS (856 aa).

Gly-618 to Ser-625 provides a ligand contact to ATP.

This sequence belongs to the DNA mismatch repair MutS family.

This protein is involved in the repair of mismatches in DNA. It is possible that it carries out the mismatch recognition step. This protein has a weak ATPase activity. The sequence is that of DNA mismatch repair protein MutS from Shewanella putrefaciens (strain CN-32 / ATCC BAA-453).